The following is a 201-amino-acid chain: Peptidyl-prolyl cis-trans isomerase FKBP11 (201 aa).

Positions 1–27 (MTLSPLLLPLQLLLLLLFSGAVCRAEA) are cleaved as a signal peptide. In terms of domain architecture, PPIase FKBP-type spans 57-144 (GDTLHIHYTG…QYDVELIALI (88 aa)). Residues 156 to 176 (ILPLVGIAMVPALLGLIGYHL) form a helical membrane-spanning segment.

The protein belongs to the FKBP-type PPIase family. As to quaternary structure, interacts with IFITM5.

The protein localises to the membrane. It carries out the reaction [protein]-peptidylproline (omega=180) = [protein]-peptidylproline (omega=0). Its function is as follows. PPIases accelerate the folding of proteins during protein synthesis. The sequence is that of Peptidyl-prolyl cis-trans isomerase FKBP11 (Fkbp11) from Mus musculus (Mouse).